Reading from the N-terminus, the 242-residue chain is Beta-glucanase (242 aa).

The signal sequence occupies residues Met1 to Ala28. A Pyrrolidone carboxylic acid modification is found at Gln29. Residues Gln29–Lys242 form the GH16 domain. Residues Cys60 and Cys89 are joined by a disulfide bond. The active-site Nucleophile is the Glu133. Glu137 (proton donor) is an active-site residue.

This sequence belongs to the glycosyl hydrolase 16 family.

The protein resides in the secreted. It catalyses the reaction Hydrolysis of (1-&gt;4)-beta-D-glucosidic linkages in beta-D-glucans containing (1-&gt;3)- and (1-&gt;4)-bonds.. The protein is Beta-glucanase (bglS) of Bacillus subtilis (strain 168).